The primary structure comprises 476 residues: MDFEAVIGLEVHAELSTNTKIYCGCTTEFGGQPNTHVCPICLGLPGSLPQLNKRVVEYGIKAGLALNCSINKVCRMDRKNYFYPDCPKNYQITQDEVPICRDGYIEIELENGEKKKIGIERIHMEEDAGKLLHTNAGTLVDYNRAGVPLIEIVSRPDIRTPEEATKYLEKLKSILSSIEVSDCKMEQGSLRCDGNISVMPKGSEKFGVRSEIKNMNSFKALEKALSYEYDRHVEAVTKGEILEQETRRWDEANSVTVLMRSKEKANDYRYFPEGDLVTLNISDEWIEEVRKTIPELPHEKAERFVNEFRIPKYDAMVLTLTMDMAKFFEETTLKSEDAKATSNWLMGDISRLMNEKTIEVKDLKFNPEQLAELIKLINAGTISNNIGKKVLDDMFKSGKSPKDIVEEKGLVQNNDEGAILEVVKKIIENNPQSIEDFKNGKKRALGFLVGLVMKETKGKANPQIVNKLVSEEANKM.

Belongs to the GatB/GatE family. GatB subfamily. Heterotrimer of A, B and C subunits.

The enzyme catalyses L-glutamyl-tRNA(Gln) + L-glutamine + ATP + H2O = L-glutaminyl-tRNA(Gln) + L-glutamate + ADP + phosphate + H(+). The catalysed reaction is L-aspartyl-tRNA(Asn) + L-glutamine + ATP + H2O = L-asparaginyl-tRNA(Asn) + L-glutamate + ADP + phosphate + 2 H(+). In terms of biological role, allows the formation of correctly charged Asn-tRNA(Asn) or Gln-tRNA(Gln) through the transamidation of misacylated Asp-tRNA(Asn) or Glu-tRNA(Gln) in organisms which lack either or both of asparaginyl-tRNA or glutaminyl-tRNA synthetases. The reaction takes place in the presence of glutamine and ATP through an activated phospho-Asp-tRNA(Asn) or phospho-Glu-tRNA(Gln). This is Aspartyl/glutamyl-tRNA(Asn/Gln) amidotransferase subunit B from Clostridium botulinum (strain Kyoto / Type A2).